The chain runs to 976 residues: Vacuolar membrane protease (976 aa).

Topologically, residues Met1 to Pro51 are cytoplasmic. Residues Trp52–Val72 form a helical membrane-spanning segment. Residues His73–Asn399 are Vacuolar-facing. Residues Asn147 and Asn150 are each glycosylated (N-linked (GlcNAc...) asparagine). The Zn(2+) site is built by His206 and Asp218. Residue Glu252 is the Proton acceptor of the active site. Residues Glu253, Glu278, and His351 each contribute to the Zn(2+) site. Residues Gly400–Leu420 form a helical membrane-spanning segment. The Cytoplasmic portion of the chain corresponds to Asn421 to Ser427. The chain crosses the membrane as a helical span at residues Val428 to Leu448. Residues Asp449–Arg477 are Vacuolar-facing. The helical transmembrane segment at Phe478 to Lys498 threads the bilayer. Topologically, residues Ala499–Arg519 are cytoplasmic. The helical transmembrane segment at Ala520–Tyr540 threads the bilayer. The Vacuolar segment spans residues Gln541–Tyr550. A helical transmembrane segment spans residues Phe551–Phe571. The Cytoplasmic segment spans residues Gly572 to Asn675. The tract at residues Thr590–Leu633 is disordered. The span at Pro618 to Thr627 shows a compositional bias: acidic residues. The chain crosses the membrane as a helical span at residues Leu676–Leu696. At Gly697–Leu718 the chain is on the vacuolar side. The chain crosses the membrane as a helical span at residues Val719–Ile739. The Cytoplasmic portion of the chain corresponds to His740–His745. Residues Ile746–Pro766 traverse the membrane as a helical segment. The Vacuolar portion of the chain corresponds to Phe767–Leu976. An N-linked (GlcNAc...) asparagine glycan is attached at Asn848.

It belongs to the peptidase M28 family. Zn(2+) is required as a cofactor.

Its subcellular location is the vacuole membrane. In terms of biological role, may be involved in vacuolar sorting and osmoregulation. In Arthroderma otae (strain ATCC MYA-4605 / CBS 113480) (Microsporum canis), this protein is Vacuolar membrane protease.